A 323-amino-acid chain; its full sequence is Secreted frizzled-related protein 3 (323 aa).

A signal peptide spans 1–32 (MVCCGPGRMLLGWAGLLVLAALCLLQVPGAQA). Positions 33-150 (AACEPVRIPL…VYDRGVCISP (118 aa)) constitute an FZ domain. 5 disulfide bridges follow: C35–C96, C43–C89, C80–C119, C108–C147, and C112–C136. An N-linked (GlcNAc...) asparagine glycan is attached at N49. An NTR domain is found at 178 to 298 (CKCKPVRATQ…WDMKLRHLGL (121 aa)). A disordered region spans residues 299–323 (GKTDASDSTQNQKSGRNSNPRPARS). The span at 304-323 (SDSTQNQKSGRNSNPRPARS) shows a compositional bias: polar residues.

It belongs to the secreted frizzled-related protein (sFRP) family. As to quaternary structure, interacts with MYOC. As to expression, expressed in kidney, brain, testis. Weak expression in spleen and heart.

Its subcellular location is the secreted. Functionally, soluble frizzled-related proteins (sFRPS) function as modulators of Wnt signaling through direct interaction with Wnts. They have a role in regulating cell growth and differentiation in specific cell types. SFRP3/FRZB appears to be involved in limb skeletogenesis. Antagonist of Wnt8 signaling. Regulates chondrocyte maturation and long bone development. This chain is Secreted frizzled-related protein 3 (Frzb), found in Mus musculus (Mouse).